The sequence spans 139 residues: Protein cornichon homolog 4 (139 aa).

3 consecutive transmembrane segments (helical) span residues 5–25, 57–77, and 118–138; these read VFVFSLLDCCALIFLSVYFII, IVTVLLLMSLHWFIFLLNLPV, and LGFHLLCFFMYLYSMILALIN.

Belongs to the cornichon family. In terms of assembly, interacts with Sec23/24 complex components SEC24B and SEC24D. Interacts with CCR5. Interacts with ADRB2 in the early secretory pathway.

The protein localises to the membrane. It is found in the endoplasmic reticulum. The protein resides in the endoplasmic reticulum-Golgi intermediate compartment. In terms of biological role, involved in G protein-coupled receptors (GPCRs) trafficking from the endoplasmic reticulum to the cell surface; it promotes the exit of GPCRs from the early secretory pathway, likely through interaction with the COPII machinery. The polypeptide is Protein cornichon homolog 4 (CNIH4) (Homo sapiens (Human)).